Consider the following 343-residue polypeptide: Aspartate carbamoyltransferase catalytic subunit (343 aa).

Arginine 71 and threonine 72 together coordinate carbamoyl phosphate. Residue lysine 99 coordinates L-aspartate. Carbamoyl phosphate-binding residues include arginine 121, histidine 149, and glutamine 152. Arginine 195 and arginine 249 together coordinate L-aspartate. Residues glycine 290 and proline 291 each coordinate carbamoyl phosphate.

Belongs to the aspartate/ornithine carbamoyltransferase superfamily. ATCase family. In terms of assembly, heterododecamer (2C3:3R2) of six catalytic PyrB chains organized as two trimers (C3), and six regulatory PyrI chains organized as three dimers (R2).

The catalysed reaction is carbamoyl phosphate + L-aspartate = N-carbamoyl-L-aspartate + phosphate + H(+). Its pathway is pyrimidine metabolism; UMP biosynthesis via de novo pathway; (S)-dihydroorotate from bicarbonate: step 2/3. In terms of biological role, catalyzes the condensation of carbamoyl phosphate and aspartate to form carbamoyl aspartate and inorganic phosphate, the committed step in the de novo pyrimidine nucleotide biosynthesis pathway. This chain is Aspartate carbamoyltransferase catalytic subunit, found in Rhodopirellula baltica (strain DSM 10527 / NCIMB 13988 / SH1).